The chain runs to 276 residues: Diaminopimelate epimerase (276 aa).

N13, Q46, and N66 together coordinate substrate. C75 functions as the Proton donor in the catalytic mechanism. Residues G76–N77, N159, N192, and E210–R211 contribute to the substrate site. C219 (proton acceptor) is an active-site residue. G220–T221 is a binding site for substrate.

The protein belongs to the diaminopimelate epimerase family. Homodimer.

It is found in the cytoplasm. The catalysed reaction is (2S,6S)-2,6-diaminopimelate = meso-2,6-diaminopimelate. The protein operates within amino-acid biosynthesis; L-lysine biosynthesis via DAP pathway; DL-2,6-diaminopimelate from LL-2,6-diaminopimelate: step 1/1. In terms of biological role, catalyzes the stereoinversion of LL-2,6-diaminopimelate (L,L-DAP) to meso-diaminopimelate (meso-DAP), a precursor of L-lysine and an essential component of the bacterial peptidoglycan. The polypeptide is Diaminopimelate epimerase (Pseudomonas putida (strain GB-1)).